Consider the following 340-residue polypeptide: Ava biosynthesis cluster protein G (340 aa).

4 consecutive transmembrane segments (helical) span residues 15 to 35, 81 to 101, 118 to 138, and 148 to 168; these read WSAF…NIWN, FMIS…LQFV, AFFV…VHAF, and LSIM…FLCI. N-linked (GlcNAc...) asparagine glycosylation is present at Asn-171. The next 2 helical transmembrane spans lie at 219–239 and 315–335; these read FSSV…YVAF and SALT…WLQI.

It is found in the membrane. It participates in secondary metabolite biosynthesis. Functionally, part of the cluster that mediates the biosynthesis of a highly modified cyclo-arginine-tryptophan dipeptide (cRW). The first step of the pathway is perfornmed by the arginine-containing cyclodipeptide synthase (RCPDS) avaA that acts as the scaffold-generating enzyme and is responsible for formation of the cyclo-Arg-Trp (cRW) diketopiperazine. AvaB then acts as a multifunctional flavoenzyme that is responsible for generating the cyclo-Arg-formylkynurenine DKP, which can be deformylated by avaC. AvaB then further catalyzes an additional N-oxidation followed by cyclization and dehydration. The next step is an N-acetylation of the guanidine group catalyzed by the arginine N-acetyltransferase avaD. The roles of the additional enzymes identified within the ava cluster still have to be determined. This is Ava biosynthesis cluster protein G from Aspergillus versicolor.